The sequence spans 645 residues: Acetyl-coenzyme A synthetase (645 aa).

CoA contacts are provided by residues 190–193 and threonine 308; that span reads RGGR. ATP contacts are provided by residues 384–386, 408–413, aspartate 497, and arginine 512; these read GEP and DTWWQT. Serine 520 provides a ligand contact to CoA. Residue arginine 523 coordinates ATP. Mg(2+)-binding residues include valine 534, histidine 536, and valine 539. The residue at position 606 (lysine 606) is an N6-acetyllysine.

Belongs to the ATP-dependent AMP-binding enzyme family. Requires Mg(2+) as cofactor. Acetylated. Deacetylation by the SIR2-homolog deacetylase activates the enzyme.

The catalysed reaction is acetate + ATP + CoA = acetyl-CoA + AMP + diphosphate. In terms of biological role, catalyzes the conversion of acetate into acetyl-CoA (AcCoA), an essential intermediate at the junction of anabolic and catabolic pathways. AcsA undergoes a two-step reaction. In the first half reaction, AcsA combines acetate with ATP to form acetyl-adenylate (AcAMP) intermediate. In the second half reaction, it can then transfer the acetyl group from AcAMP to the sulfhydryl group of CoA, forming the product AcCoA. The protein is Acetyl-coenzyme A synthetase of Halorhodospira halophila (strain DSM 244 / SL1) (Ectothiorhodospira halophila (strain DSM 244 / SL1)).